Consider the following 699-residue polypeptide: DNA ligase (699 aa).

Residues Asp-47–Asp-51, Ser-96–Leu-97, and Glu-128 each bind NAD(+). Lys-130 acts as the N6-AMP-lysine intermediate in catalysis. Arg-151, Glu-186, Lys-303, and Lys-327 together coordinate NAD(+). Residues Cys-422, Cys-425, Cys-440, and Cys-446 each contribute to the Zn(2+) site. Residues Gly-620–Leu-699 form the BRCT domain.

The protein belongs to the NAD-dependent DNA ligase family. LigA subfamily. Requires Mg(2+) as cofactor. It depends on Mn(2+) as a cofactor.

The enzyme catalyses NAD(+) + (deoxyribonucleotide)n-3'-hydroxyl + 5'-phospho-(deoxyribonucleotide)m = (deoxyribonucleotide)n+m + AMP + beta-nicotinamide D-nucleotide.. Its function is as follows. DNA ligase that catalyzes the formation of phosphodiester linkages between 5'-phosphoryl and 3'-hydroxyl groups in double-stranded DNA using NAD as a coenzyme and as the energy source for the reaction. It is essential for DNA replication and repair of damaged DNA. The polypeptide is DNA ligase (Orientia tsutsugamushi (strain Ikeda) (Rickettsia tsutsugamushi)).